Consider the following 172-residue polypeptide: NADH-ubiquinone oxidoreductase chain 6 (172 aa).

A run of 5 helical transmembrane segments spans residues 1–21, 27–47, 48–68, 87–107, and 138–158; these read MTYF…AVAS, YGVV…LSLG, VSFV…VVFV, VVGY…VGGF, and CGVG…FVVL.

Belongs to the complex I subunit 6 family.

The protein resides in the mitochondrion membrane. The catalysed reaction is a ubiquinone + NADH + 5 H(+)(in) = a ubiquinol + NAD(+) + 4 H(+)(out). Its function is as follows. Core subunit of the mitochondrial membrane respiratory chain NADH dehydrogenase (Complex I) that is believed to belong to the minimal assembly required for catalysis. Complex I functions in the transfer of electrons from NADH to the respiratory chain. The immediate electron acceptor for the enzyme is believed to be ubiquinone. The chain is NADH-ubiquinone oxidoreductase chain 6 (MT-ND6) from Uria lomvia (Thick-billed murre).